The sequence spans 336 residues: 3-isopropylmalate dehydrogenase (336 aa).

Substrate is bound by residues R87, R97, R121, and D211. Mg(2+) contacts are provided by D211, D235, and D239. 271–283 (GSAPDIAGQGIAD) provides a ligand contact to NAD(+).

It belongs to the isocitrate and isopropylmalate dehydrogenases family. LeuB type 2 subfamily. Homodimer. Mg(2+) is required as a cofactor. Mn(2+) serves as cofactor.

It is found in the cytoplasm. It carries out the reaction (2R,3S)-3-isopropylmalate + NAD(+) = 4-methyl-2-oxopentanoate + CO2 + NADH. Its pathway is amino-acid biosynthesis; L-leucine biosynthesis; L-leucine from 3-methyl-2-oxobutanoate: step 3/4. Catalyzes the oxidation of 3-carboxy-2-hydroxy-4-methylpentanoate (3-isopropylmalate) to 3-carboxy-4-methyl-2-oxopentanoate. The product decarboxylates to 4-methyl-2 oxopentanoate. The sequence is that of 3-isopropylmalate dehydrogenase from Mycobacterium leprae (strain Br4923).